We begin with the raw amino-acid sequence, 151 residues long: Protein NrdI (151 aa).

It belongs to the NrdI family.

In terms of biological role, probably involved in ribonucleotide reductase function. This Mesoplasma florum (strain ATCC 33453 / NBRC 100688 / NCTC 11704 / L1) (Acholeplasma florum) protein is Protein NrdI.